The following is an 87-amino-acid chain: Small ribosomal subunit protein eS21 (87 aa).

This sequence belongs to the eukaryotic ribosomal protein eS21 family. Component of the small ribosomal subunit. Mature ribosomes consist of a small (40S) and a large (60S) subunit. The 40S subunit contains about 33 different proteins and 1 molecule of RNA (18S). The 60S subunit contains about 49 different proteins and 3 molecules of RNA (25S, 5.8S and 5S).

It is found in the cytoplasm. Functionally, required for the processing of the 20S rRNA-precursor to mature 18S rRNA in a late step of the maturation of 40S ribosomal subunits. Has a physiological role leading to 18S rRNA stability. The protein is Small ribosomal subunit protein eS21 (RPS21) of Candida albicans (Yeast).